Reading from the N-terminus, the 418-residue chain is Queuine tRNA-ribosyltransferase accessory subunit 2 (418 aa).

Zn(2+) contacts are provided by Cys-325, Cys-327, Cys-330, and His-356.

It belongs to the queuine tRNA-ribosyltransferase family. QTRT2 subfamily. Heterodimer of a catalytic subunit and an accessory subunit. Zn(2+) is required as a cofactor.

The protein localises to the cytoplasm. Its function is as follows. Non-catalytic subunit of the queuine tRNA-ribosyltransferase (TGT) that catalyzes the base-exchange of a guanine (G) residue with queuine (Q) at position 34 (anticodon wobble position) in tRNAs with GU(N) anticodons (tRNA-Asp, -Asn, -His and -Tyr), resulting in the hypermodified nucleoside queuosine (7-(((4,5-cis-dihydroxy-2-cyclopenten-1-yl)amino)methyl)-7-deazaguanosine). This is Queuine tRNA-ribosyltransferase accessory subunit 2 from Drosophila yakuba (Fruit fly).